A 2842-amino-acid chain; its full sequence is Adenomatous polyposis coli protein (2842 aa).

Ala2 bears the N-acetylalanine mark. Residues 2–62 (AAASYDQLLK…GSIEDETMTS (61 aa)) are a coiled coil. Residues Ser105 and Ser109 each carry the phosphoserine modification. Residues 125-260 (SRESTGYLEE…ASHEAERQLE (136 aa)) are a coiled coil. The segment at 238-304 (AEAERSSQSK…THSAPRRLTS (67 aa)) is disordered. Positions 239-259 (EAERSSQSKHETASHEAERQL) are enriched in basic and acidic residues. Over residues 268–279 (NLATSGSGQSSA) the composition is skewed to polar residues. ARM repeat units lie at residues 451 to 493 (LMKL…HYSV), 503 to 545 (LTNL…IASV), 546 to 589 (LRNL…VLSA), 590 to 636 (LWNL…GGGI), 637 to 681 (LRNV…ACGT), 682 to 723 (LWNL…SAAA), and 724 to 765 (LRNL…LDAQ). Ser742, Ser746, and Ser778 each carry phosphoserine. The segment at 828–877 (VLPSSSSSRGSLDSSRSEKDRSLERERGIGLSTYHSATENPGTSSKRGLQ) is disordered. Residues 831–841 (SSSSSRGSLDS) show a composition bias toward low complexity. The span at 842 to 855 (SRSEKDRSLERERG) shows a compositional bias: basic and acidic residues. Residues 860-877 (TYHSATENPGTSSKRGLQ) are compositionally biased toward polar residues. Ser906 carries the post-translational modification Phosphoserine. Disordered regions lie at residues 921 to 942 (RRSS…ESSN) and 956 to 988 (RSSN…SEDD). Residues 931 to 942 (NTHNFAKSESSN) are compositionally biased toward polar residues. Residues 959 to 969 (NDSLNSVTSSD) show a composition bias toward low complexity. 3 positions are modified to phosphoserine: Ser985, Ser1036, and Ser1040. An interaction with catenins region spans residues 1018 to 1167 (ELDTPINYSL…TNYSIKYNEE (150 aa)). Disordered regions lie at residues 1058–1078 (IKQN…VYSE), 1092–1166 (GQQE…KYNE), 1188–1249 (SQKP…CKVP), and 1306–1373 (ENDV…PEHY). Polar residues-rich tracts occupy residues 1066–1078 (SRSQ…VYSE) and 1103–1128 (RGTN…QSLC). A compositionally biased stretch (basic and acidic residues) spans 1144–1157 (RYSEEEQHEEEERP). Composition is skewed to low complexity over residues 1188–1200 (SQKP…KTPS) and 1209–1223 (NSPS…SSNA). Composition is skewed to polar residues over residues 1224 to 1242 (KRQS…QTPK) and 1323 to 1340 (VSQS…SGLA). Over residues 1352–1363 (SSGAKSPSKSGA) the composition is skewed to low complexity. Ser1357, Ser1368, Ser1382, Ser1389, and Ser1392 each carry phosphoserine. Disordered stretches follow at residues 1398–1474 (IASS…VSAA), 1525–1568 (PPVQ…SDDD), 1584–1609 (KSSR…KPSQ), and 1661–1711 (ESPP…IPDL). Thr1435 bears the Phosphothreonine mark. The segment covering 1435–1444 (TPPPPPPPQP) has biased composition (pro residues). Residues 1532 to 1546 (NGNETEPEQPEESNE) show a composition bias toward acidic residues. A compositionally biased stretch (basic and acidic residues) spans 1547 to 1562 (NQDKEVEKPDSEKDLL). Residue Ser1565 is modified to Phosphoserine. Basic and acidic residues predominate over residues 1681 to 1700 (EFEKRDTIPTEGRSTDEAQR). At Ser1714 the chain carries Phosphoserine. Positions 1748–1762 (VQQASMTSSGTNKNQ) are enriched in polar residues. Disordered regions lie at residues 1748 to 1950 (VQQA…EKLQ), 1963 to 2010 (RNSS…APKS), and 2043 to 2067 (SSAM…PRKV). Ser1772 bears the Phosphoserine mark. Composition is skewed to basic and acidic residues over residues 1783–1792 (YRTRVRKNTD) and 1804–1833 (SDNK…DRVR). Ser1859, Ser1861, and Ser1862 each carry phosphoserine. Residues 1864–1891 (DFDDDDVDLSREKAELRKGKESKDSEAK) form a highly charged region. Residues 1871–1894 (DLSREKAELRKGKESKDSEAKVTC) show a composition bias toward basic and acidic residues. Positions 1899 to 1911 (SSSQQSARKAQAS) are enriched in low complexity. Polar residues predominate over residues 1927–1936 (EQPTFPQSSK). Over residues 1937–1949 (DVPDRGAATDEKL) the composition is skewed to basic and acidic residues. Residues Ser1969 and Ser1971 each carry the phosphoserine modification. Positions 2034-2058 (EDDLLRECISSAMPKKRRPSRLKGE) are interaction with AXIN1. 6 positions are modified to phosphoserine: Ser2087, Ser2092, Ser2125, Ser2129, Ser2130, and Ser2132. Disordered stretches follow at residues 2148-2173 (FHLT…PGEK), 2234-2641 (PGVR…AESK), and 2664-2842 (CPIN…VTSV). Residue Thr2151 is modified to Phosphothreonine. The tract at residues 2167–2674 (ILKPGEKSTL…PINNPRSGRS (508 aa)) is basic region. Composition is skewed to polar residues over residues 2257–2272 (ASKS…TSPR) and 2283–2347 (SPIT…QLPR). Residues Ser2260, Ser2270, and Ser2283 each carry the phosphoserine modification. Residues 2348 to 2369 (TSSPSTASTKSSGSGKMSYTSP) show a composition bias toward low complexity. Polar residues-rich tracts occupy residues 2370-2411 (GRQL…NGSN) and 2418-2427 (RMSSTKSSGS). Residues 2459 to 2477 (SASFESLSPSSRPDSPTRS) are compositionally biased toward low complexity. Phosphoserine occurs at positions 2473 and 2535. Positions 2475 to 2842 (TRSQAQTPVL…HSGSYLVTSV (368 aa)) are interaction with DLG1. A compositionally biased stretch (basic and acidic residues) spans 2518–2535 (SDGRPSKRHDIARSHSES). Over residues 2555–2568 (SSSLPRVSTWRRTG) the composition is skewed to polar residues. Position 2569 is a phosphoserine (Ser2569). Over residues 2569–2579 (SSSSILSASSE) the composition is skewed to low complexity. The span at 2580–2592 (SSEKAKSEDEKHV) shows a compositional bias: basic and acidic residues. The segment covering 2629-2638 (TTSSGAASGA) has biased composition (low complexity). Polar residues-rich tracts occupy residues 2668-2679 (NPRSGRSPTGNT) and 2702-2713 (GKQSVGSGSPVQ). Ser2671 and Ser2674 each carry phosphoserine. The tract at residues 2674–2842 (SPTGNTPPVI…HSGSYLVTSV (169 aa)) is interaction with MAPRE1. Thr2679 is modified (phosphothreonine). 2 positions are modified to phosphoserine: Ser2710 and Ser2723. Residues 2762-2773 (SSSSSSKHSSPS) are compositionally biased toward low complexity. The span at 2783–2809 (FNYNPSPRKSSADSTSARPSQIPTPVG) shows a compositional bias: polar residues. Position 2788 is a phosphoserine (Ser2788). Positions 2802 to 2805 (SQIP) match the Microtubule tip localization signal motif. Residues 2840–2842 (TSV) carry the PDZ-binding motif.

Belongs to the adenomatous polyposis coli (APC) family. As to quaternary structure, forms homooligomers. Found in a complex consisting of ARHGEF4, APC and CTNNB1. Found in a complex composed of MACF1, APC, AXIN1, CTNNB1 and GSK3B. The complex composed, at least, of APC, CTNNB1 and GSK3B interacts with JPT1; the interaction requires the inactive form of GSK3B (phosphorylated at 'Ser-9'). Interacts with APC2. Interacts with DLG1 (via PDZ domains) and DLG3 (via PDZ domains). Interacts with alpha- and beta-catenins. Interacts with AXIN1 (via RGS domain). Interacts with ARHGEF4 (via N-terminus). Interacts (via C-terminal residues 2674-2843) with MAPRE1 (via C-terminal residues 206-211); the interaction inhibits association with and bundling of F-actin. Interacts with MAPRE2 and MAPRE3 (via C-terminus). Interacts with DIAPH1; DIAPH1 acts as a scaffold protein for MAPRE1 and APC to stabilize microtubules and promote cell migration. Interacts with DIAPH2. Interacts with SCRIB; may mediate APC targeting to adherens junctions of epithelial cells. Interacts with SPATA13 (via N-terminus and SH3 domain). Interacts with ASAP1 (via SH3 domain). Interacts (at the cell membrane) with AMER1 and AMER2 (via ARM repeats). Interacts with KHDRBS1. Interacts with actin; binds both to F-actin and actin filament bundles. Post-translationally, phosphorylated; phosphorylation enhances the F-actin bundling activity. Phosphorylated by GSK3B. Ubiquitinated, leading to its degradation by the proteasome. Ubiquitination is facilitated by Axin. Deubiquitinated by ZRANB1/TRABID.

It localises to the cell junction. It is found in the adherens junction. The protein localises to the cytoplasm. The protein resides in the cytoskeleton. Its subcellular location is the cell projection. It localises to the lamellipodium. It is found in the ruffle membrane. The protein localises to the cell membrane. Tumor suppressor. Promotes rapid degradation of CTNNB1 and participates in Wnt signaling as a negative regulator. APC activity is correlated with its phosphorylation state. Activates the GEF activity of SPATA13 and ARHGEF4. Plays a role in hepatocyte growth factor (HGF)-induced cell migration. Required for MMP9 up-regulation via the JNK signaling pathway in colorectal tumor cells. Associates with both microtubules and actin filaments, components of the cytoskeleton. Plays a role in mediating the organization of F-actin into ordered bundles. Functions downstream of Rho GTPases and DIAPH1 to selectively stabilize microtubules. Acts as a mediator of ERBB2-dependent stabilization of microtubules at the cell cortex. It is required for the localization of MACF1 to the cell membrane and this localization of MACF1 is critical for its function in microtubule stabilization. The sequence is that of Adenomatous polyposis coli protein (Apc) from Rattus norvegicus (Rat).